A 358-amino-acid chain; its full sequence is uncharacterized protein (358 aa).

The segment covering 70–88 (RPAATAGTTPATGASGSAR) has biased composition (low complexity). Residues 70-93 (RPAATAGTTPATGASGSARPTDAA) form a disordered region. The Macro domain maps to 178–353 (PSTCRGDNVS…AFSAAIQAGE (176 aa)).

This is an uncharacterized protein from Mycobacterium bovis (strain ATCC BAA-935 / AF2122/97).